The primary structure comprises 104 residues: Protein RnfH (104 aa).

The protein belongs to the UPF0125 (RnfH) family.

This is Protein RnfH from Pseudomonas fluorescens (strain Pf0-1).